The sequence spans 556 residues: Glucose-6-phosphate isomerase (556 aa).

The active-site Proton donor is the glutamate 360. Catalysis depends on residues histidine 391 and lysine 519.

It belongs to the GPI family.

Its subcellular location is the cytoplasm. It carries out the reaction alpha-D-glucose 6-phosphate = beta-D-fructose 6-phosphate. The protein operates within carbohydrate biosynthesis; gluconeogenesis. It functions in the pathway carbohydrate degradation; glycolysis; D-glyceraldehyde 3-phosphate and glycerone phosphate from D-glucose: step 2/4. Its function is as follows. Catalyzes the reversible isomerization of glucose-6-phosphate to fructose-6-phosphate. This chain is Glucose-6-phosphate isomerase, found in Acinetobacter baumannii (strain AB0057).